The following is a 197-amino-acid chain: MAILSDRDIKRYIEEGLITIDPLDDPERQIQPSSVDLRIGNEFKGFRVIRKPCIDPKDPSDIESYMETFHVEDGPFIIHPGEFALATTHEYIALPEDLVARVEGRSSIGRLGITMHVTAGYIDPGFHGRITLEISNIGKMPVALYPRQRVCQIVFETMTSPAERPYGHPSRDSKYIGQTRPQTSRIKDDYEIRNSRL.

DCTP-binding positions include 105–110 (RSSIGR), Asp-123, 131–133 (TLE), Gln-152, Tyr-166, Lys-174, and Gln-178. The active-site Proton donor/acceptor is the Glu-133. The interval 161 to 183 (PAERPYGHPSRDSKYIGQTRPQT) is disordered. The span at 165–174 (PYGHPSRDSK) shows a compositional bias: basic and acidic residues.

The protein belongs to the dCTP deaminase family. As to quaternary structure, homotrimer.

It carries out the reaction dCTP + 2 H2O = dUMP + NH4(+) + diphosphate. The protein operates within pyrimidine metabolism; dUMP biosynthesis; dUMP from dCTP: step 1/1. Functionally, bifunctional enzyme that catalyzes both the deamination of dCTP to dUTP and the hydrolysis of dUTP to dUMP without releasing the toxic dUTP intermediate. The polypeptide is dCTP deaminase, dUMP-forming (Methanothermobacter thermautotrophicus (strain ATCC 29096 / DSM 1053 / JCM 10044 / NBRC 100330 / Delta H) (Methanobacterium thermoautotrophicum)).